The following is a 379-amino-acid chain: UDP-4-amino-4-deoxy-L-arabinose--oxoglutarate aminotransferase (379 aa).

An N6-(pyridoxal phosphate)lysine modification is found at lysine 182.

It belongs to the DegT/DnrJ/EryC1 family. ArnB subfamily. Homodimer. It depends on pyridoxal 5'-phosphate as a cofactor.

It carries out the reaction UDP-4-amino-4-deoxy-beta-L-arabinose + 2-oxoglutarate = UDP-beta-L-threo-pentopyranos-4-ulose + L-glutamate. It participates in nucleotide-sugar biosynthesis; UDP-4-deoxy-4-formamido-beta-L-arabinose biosynthesis; UDP-4-deoxy-4-formamido-beta-L-arabinose from UDP-alpha-D-glucuronate: step 2/3. Its pathway is bacterial outer membrane biogenesis; lipopolysaccharide biosynthesis. Its function is as follows. Catalyzes the conversion of UDP-4-keto-arabinose (UDP-Ara4O) to UDP-4-amino-4-deoxy-L-arabinose (UDP-L-Ara4N). The modified arabinose is attached to lipid A and is required for resistance to polymyxin and cationic antimicrobial peptides. The protein is UDP-4-amino-4-deoxy-L-arabinose--oxoglutarate aminotransferase of Shigella sonnei (strain Ss046).